A 184-amino-acid polypeptide reads, in one-letter code: dCTP deaminase (184 aa).

DCTP contacts are provided by residues 107–112, 131–133, glutamine 152, tyrosine 166, and glutamine 176; these read KSTYAR and TLE. The Proton donor/acceptor role is filled by glutamate 133.

Belongs to the dCTP deaminase family. In terms of assembly, homotrimer.

It catalyses the reaction dCTP + H2O + H(+) = dUTP + NH4(+). The protein operates within pyrimidine metabolism; dUMP biosynthesis; dUMP from dCTP (dUTP route): step 1/2. In terms of biological role, catalyzes the deamination of dCTP to dUTP. The protein is dCTP deaminase of Novosphingobium aromaticivorans (strain ATCC 700278 / DSM 12444 / CCUG 56034 / CIP 105152 / NBRC 16084 / F199).